Here is a 108-residue protein sequence, read N- to C-terminus: Ferredoxin, plant-type (108 aa).

The 92-residue stretch at 5-96 (FEITVQPGGE…DLCIERYSKP (92 aa)) folds into the 2Fe-2S ferredoxin-type domain. [2Fe-2S] cluster contacts are provided by Cys-40, Cys-45, Cys-48, and Cys-80.

Belongs to the 2Fe2S plant-type ferredoxin family.

It functions in the pathway aromatic compound metabolism; catechol degradation. In terms of biological role, ferredoxins are iron-sulfur proteins that transfer electrons in a wide variety of metabolic reactions. The polypeptide is Ferredoxin, plant-type (nahT) (Pseudomonas putida (Arthrobacter siderocapsulatus)).